Consider the following 326-residue polypeptide: MTADRWAGRTVLVTGALGFIGSHFVRQLDARGAEVLALYRTERPEIQAELAALNRVRLVRTELRDESDVRGAFKYLAPSIDTVVHCAAMDGNAQFKLERSAEILDSNQRTISNLLNCVRDFGVGEVVVMSSSELYSASPTVAAREEDDFRRSMRYTDNGYVLSKTYGEILARLHREQFGTNVFLVRPGNVYGPGDGFDCSRGRVIPSMLAKADAGEEIEIWGDGSQTRSFVHVADLVRASLRLLETGKYPEMNVAGAEQVSILELAGMVMAVLGRPERIRLDPSRPVGAPSRLLDLSRMSEVIDFDPQPLRAGLEETARWYRLHKR.

NAD(+) contacts are provided by residues 15–21 and 129–132; these read GALGFIG and MSSS. Tyr160 functions as the Proton donor/acceptor in the catalytic mechanism. NAD(+) contacts are provided by residues Lys164 and 187-190; that span reads PGNV.

Belongs to the NAD(P)-dependent epimerase/dehydratase family.

It carries out the reaction dTDP-6-deoxy-alpha-D-allose + NAD(+) = dTDP-4-dehydro-6-deoxy-alpha-D-allose + NADH + H(+). The catalysed reaction is dTDP-6-deoxy-alpha-D-allose + NADP(+) = dTDP-4-dehydro-6-deoxy-alpha-D-allose + NADPH + H(+). Functionally, catalyzes the stereospecific reduction of the C-4 keto group of dTDP-4-dehydro-6-deoxy-D-allose, leading to dTDP-6-deoxy-D-allose, an intermediate in the biosynthesis of the mycinose moiety of dihydrochalcomycin (GERI-155) antibiotic. Cannot directly reduce dTDP-4-dehydro-6-deoxyglucose, and thus acts after the epimerization step catalyzed by GerF. The chain is dTDP-4-dehydro-6-deoxy-D-allose reductase (gerKI) from Streptomyces sp.